The chain runs to 428 residues: D-inositol 3-phosphate glycosyltransferase (428 aa).

Residue His5 coordinates 1D-myo-inositol 3-phosphate. UDP-N-acetyl-alpha-D-glucosamine contacts are provided by residues 11–12 (QP) and Gly19. 1D-myo-inositol 3-phosphate contacts are provided by residues 16–21 (DAGGMN), Lys74, Tyr107, Thr131, and Arg151. Positions 225, 230, and 283 each coordinate UDP-N-acetyl-alpha-D-glucosamine. Residues Phe292, Gln293, and Ala295 each contribute to the Mg(2+) site. Positions 305 and 313 each coordinate UDP-N-acetyl-alpha-D-glucosamine. Thr319 contributes to the Mg(2+) binding site.

It belongs to the glycosyltransferase group 1 family. MshA subfamily. In terms of assembly, homodimer.

The enzyme catalyses 1D-myo-inositol 3-phosphate + UDP-N-acetyl-alpha-D-glucosamine = 1D-myo-inositol 2-acetamido-2-deoxy-alpha-D-glucopyranoside 3-phosphate + UDP + H(+). Its function is as follows. Catalyzes the transfer of a N-acetyl-glucosamine moiety to 1D-myo-inositol 3-phosphate to produce 1D-myo-inositol 2-acetamido-2-deoxy-glucopyranoside 3-phosphate in the mycothiol biosynthesis pathway. In Mycobacterium leprae (strain Br4923), this protein is D-inositol 3-phosphate glycosyltransferase.